Consider the following 219-residue polypeptide: Tegument protein UL14 (219 aa).

Residues 159 to 219 form a disordered region; sequence VHTDAPSRPG…GFARDCPDGE (61 aa). Over residues 186 to 202 the composition is skewed to pro residues; that stretch reads APPPETAPSPEPAPGPA.

It belongs to the alphaherpesvirinae HHV-1 UL14 protein family. Post-translationally, phosphorylated.

Its subcellular location is the virion tegument. It is found in the host cytoplasm. The protein localises to the host nucleus. Its function is as follows. Contributes to the nuclear transport of the viral transcriptional activator VP16 during the early phase of infection. Therefore, participates indirectly in the regulation of the immediate-early gene expression. Additionally, seems to be important for efficient nuclear targeting of capsids. The sequence is that of Tegument protein UL14 from Human herpesvirus 2 (strain HG52) (HHV-2).